The sequence spans 101 residues: Iron-sulfur cluster assembly protein CyaY (101 aa).

The protein belongs to the frataxin family.

Involved in iron-sulfur (Fe-S) cluster assembly. May act as a regulator of Fe-S biogenesis. In Rickettsia felis (strain ATCC VR-1525 / URRWXCal2) (Rickettsia azadi), this protein is Iron-sulfur cluster assembly protein CyaY.